Here is a 485-residue protein sequence, read N- to C-terminus: MASISDIHQQLISKQRSAVEITQEALENINQLEPKLKSFICVTAEKAIAQARQVDAKIAAGEKIGLLTGIPIAVKDNICTRGIPTTCGSKILQNFIPPYESTVTQKLVDAGAIILGKTNLDEFGMGSSTENSAYQVTTNPWDNTRVPGGSSGGSAAAVASAESVVALGSDTGGSIRQPASFCGVVGIKPTYGLVSRYGLVAYASSMDQIGPLSRTVKDSAILLQAIAGYDPKDSTSLNVPVPDYTKNLTPNLRPKGQIRIGLIQETFGDGLDSSVLQAFTKAVELMQELGAEIQVISCPRFSYGLPTYYVIAPSEASANLARYDGVKYGFRASESENLLNMYAKTRSEGFGSEVKRRIMIGTYALSAGYYDAYYLKAQKVRTLIKEDFDKAFAKVDILACPTSPTTAFKLGEKSDNPLSMYLSDLMTIPVNLAGLPALSLPCGFDQQGLPIGMQLISNVLKEDLLFEAAYVYEQANNWYKFQPQL.

Active-site charge relay system residues include K75 and S150. S174 functions as the Acyl-ester intermediate in the catalytic mechanism.

Belongs to the amidase family. GatA subfamily. Heterotrimer of A, B and C subunits.

The catalysed reaction is L-glutamyl-tRNA(Gln) + L-glutamine + ATP + H2O = L-glutaminyl-tRNA(Gln) + L-glutamate + ADP + phosphate + H(+). In terms of biological role, allows the formation of correctly charged Gln-tRNA(Gln) through the transamidation of misacylated Glu-tRNA(Gln) in organisms which lack glutaminyl-tRNA synthetase. The reaction takes place in the presence of glutamine and ATP through an activated gamma-phospho-Glu-tRNA(Gln). The chain is Glutamyl-tRNA(Gln) amidotransferase subunit A from Trichodesmium erythraeum (strain IMS101).